Here is a 223-residue protein sequence, read N- to C-terminus: Ribose-5-phosphate isomerase A (223 aa).

Substrate-binding positions include 32-35 (TGST), 85-88 (DGAD), and 98-101 (KGGG). Catalysis depends on E107, which acts as the Proton acceptor. Substrate is bound at residue K125.

This sequence belongs to the ribose 5-phosphate isomerase family. In terms of assembly, homodimer.

The enzyme catalyses aldehydo-D-ribose 5-phosphate = D-ribulose 5-phosphate. It participates in carbohydrate degradation; pentose phosphate pathway; D-ribose 5-phosphate from D-ribulose 5-phosphate (non-oxidative stage): step 1/1. In terms of biological role, catalyzes the reversible conversion of ribose-5-phosphate to ribulose 5-phosphate. In Pseudomonas fluorescens (strain ATCC BAA-477 / NRRL B-23932 / Pf-5), this protein is Ribose-5-phosphate isomerase A.